The sequence spans 340 residues: Adenosine kinase (340 aa).

Residue aspartate 293 is part of the active site.

It belongs to the carbohydrate kinase PfkB family. Mg(2+) is required as a cofactor.

The catalysed reaction is adenosine + ATP = AMP + ADP + H(+). The protein operates within purine metabolism; AMP biosynthesis via salvage pathway; AMP from adenosine: step 1/1. Functionally, ATP dependent phosphorylation of adenosine and other related nucleoside analogs to monophosphate derivatives. ADO1 does not play a major role in adenine utilization in yeast. Its physiological role could primarily be to recycle adenosine produced by the methyl cycle. The protein is Adenosine kinase of Saccharomyces cerevisiae (strain ATCC 204508 / S288c) (Baker's yeast).